Here is a 379-residue protein sequence, read N- to C-terminus: MTEYLFTSESVSEGHPDKIADQISDALLDEIIKQDLKARVACETYVKTGMVLIGGEITTTAWVDVEEITRNTINNIGYINSETGFDANSCAVLSTIGKQSPDITQGVDRCNPLEQGAGDQGIIFGYATNETEVLMPAPITYAHLLVKKQSELRKKNILHWLRPDAKSQVTFKYKNGRIIGIDTVVFSTQHKESITQDVLKEAVMEEIIKPVLPNKWLTKNTKFFINPTGRFVIGGPMGDCGLTGRKIIVDTYGGMSRHGGGAFSGKDPSKVDRSAAYAARYVAKNIVAAGLADRCEIQLSYAIGIAEPTSIMIETFRTGKISNKSLINLVRNIFDLRPYGLIEMLDLLRPIYLNTAVYGHFGREEFPWEKLDKVDELLQ.

Residue His-15 participates in ATP binding. Asp-17 serves as a coordination point for Mg(2+). Glu-43 contacts K(+). Residues Glu-56 and Gln-99 each coordinate L-methionine. Positions 99–109 are flexible loop; it reads QSPDITQGVDR. ATP-binding positions include 164 to 166, 230 to 231, Asp-239, 245 to 246, Ala-262, and Lys-266; these read DAK, RF, and RK. Residue Asp-239 coordinates L-methionine. Lys-270 contributes to the L-methionine binding site.

It belongs to the AdoMet synthase family. In terms of assembly, homotetramer; dimer of dimers. Mg(2+) is required as a cofactor. The cofactor is K(+).

The protein localises to the cytoplasm. It carries out the reaction L-methionine + ATP + H2O = S-adenosyl-L-methionine + phosphate + diphosphate. Its pathway is amino-acid biosynthesis; S-adenosyl-L-methionine biosynthesis; S-adenosyl-L-methionine from L-methionine: step 1/1. In terms of biological role, catalyzes the formation of S-adenosylmethionine (AdoMet) from methionine and ATP. The overall synthetic reaction is composed of two sequential steps, AdoMet formation and the subsequent tripolyphosphate hydrolysis which occurs prior to release of AdoMet from the enzyme. The polypeptide is S-adenosylmethionine synthase (Buchnera aphidicola subsp. Schizaphis graminum (strain Sg)).